The primary structure comprises 277 residues: Small ribosomal subunit protein uS3 (277 aa).

In terms of domain architecture, KH type-2 spans 43 to 111 (IRKVMNKDLE…QVQLNIFEVK (69 aa)). The disordered stretch occupies residues 216–277 (FEEQQAQQGN…EAAVEPETKE (62 aa)). Basic and acidic residues predominate over residues 264-277 (EVSKEAAVEPETKE).

The protein belongs to the universal ribosomal protein uS3 family. In terms of assembly, part of the 30S ribosomal subunit. Forms a tight complex with proteins S10 and S14.

Binds the lower part of the 30S subunit head. Binds mRNA in the 70S ribosome, positioning it for translation. This chain is Small ribosomal subunit protein uS3, found in Bifidobacterium animalis subsp. lactis (strain AD011).